The sequence spans 258 residues: Imidazole glycerol phosphate synthase subunit HisF (258 aa).

Active-site residues include aspartate 11 and aspartate 130.

It belongs to the HisA/HisF family. In terms of assembly, heterodimer of HisH and HisF.

The protein localises to the cytoplasm. The catalysed reaction is 5-[(5-phospho-1-deoxy-D-ribulos-1-ylimino)methylamino]-1-(5-phospho-beta-D-ribosyl)imidazole-4-carboxamide + L-glutamine = D-erythro-1-(imidazol-4-yl)glycerol 3-phosphate + 5-amino-1-(5-phospho-beta-D-ribosyl)imidazole-4-carboxamide + L-glutamate + H(+). Its pathway is amino-acid biosynthesis; L-histidine biosynthesis; L-histidine from 5-phospho-alpha-D-ribose 1-diphosphate: step 5/9. In terms of biological role, IGPS catalyzes the conversion of PRFAR and glutamine to IGP, AICAR and glutamate. The HisF subunit catalyzes the cyclization activity that produces IGP and AICAR from PRFAR using the ammonia provided by the HisH subunit. In Xanthomonas campestris pv. campestris (strain 8004), this protein is Imidazole glycerol phosphate synthase subunit HisF.